We begin with the raw amino-acid sequence, 179 residues long: Translation initiation factor IF-3 (179 aa).

The protein belongs to the IF-3 family. As to quaternary structure, monomer.

The protein resides in the cytoplasm. IF-3 binds to the 30S ribosomal subunit and shifts the equilibrium between 70S ribosomes and their 50S and 30S subunits in favor of the free subunits, thus enhancing the availability of 30S subunits on which protein synthesis initiation begins. This Zymomonas mobilis subsp. mobilis (strain ATCC 31821 / ZM4 / CP4) protein is Translation initiation factor IF-3.